An 88-amino-acid chain; its full sequence is UPF0473 protein CLL_A1177 (88 aa).

It belongs to the UPF0473 family.

This chain is UPF0473 protein CLL_A1177, found in Clostridium botulinum (strain Eklund 17B / Type B).